The sequence spans 294 residues: 2-dehydropantoate 2-reductase (294 aa).

NADP(+) is bound by residues 10–15, Arg34, Lys74, Asn98, and Ala122; that span reads GAGALG. The active-site Proton donor is Lys178. Substrate contacts are provided by residues Lys178, Asn182, Asn186, Asn196, and 243 to 246; that span reads NRSS. Residue Glu258 participates in NADP(+) binding.

Belongs to the ketopantoate reductase family.

Its subcellular location is the cytoplasm. It catalyses the reaction (R)-pantoate + NAD(+) = 2-dehydropantoate + NADH + H(+). The enzyme catalyses (R)-pantoate + NADP(+) = 2-dehydropantoate + NADPH + H(+). It participates in cofactor biosynthesis; coenzyme A biosynthesis. Its function is as follows. Catalyzes the NAD(P)H-dependent reduction of ketopantoate into pantoic acid. In Archaeoglobus fulgidus (strain ATCC 49558 / DSM 4304 / JCM 9628 / NBRC 100126 / VC-16), this protein is 2-dehydropantoate 2-reductase.